The sequence spans 465 residues: Fumarate hydratase class II (465 aa).

Residues 100 to 102 (SGT), 131 to 134 (HPND), 141 to 143 (SSN), and threonine 189 each bind substrate. Histidine 190 (proton donor/acceptor) is an active-site residue. The active site involves serine 320. Substrate-binding positions include serine 321 and 326 to 328 (KVN).

It belongs to the class-II fumarase/aspartase family. Fumarase subfamily. As to quaternary structure, homotetramer.

Its subcellular location is the cytoplasm. The enzyme catalyses (S)-malate = fumarate + H2O. It functions in the pathway carbohydrate metabolism; tricarboxylic acid cycle; (S)-malate from fumarate: step 1/1. Functionally, involved in the TCA cycle. Catalyzes the stereospecific interconversion of fumarate to L-malate. The sequence is that of Fumarate hydratase class II from Mesorhizobium japonicum (strain LMG 29417 / CECT 9101 / MAFF 303099) (Mesorhizobium loti (strain MAFF 303099)).